The sequence spans 782 residues: U-box domain-containing protein 7 (782 aa).

Positions Val-271–Gln-345 constitute a U-box domain. 5 ARM repeats span residues Glu-456 to Val-499, Asn-502 to Asp-541, Glu-542 to Thr-581, Ser-583 to Ser-623, and Glu-626 to Asn-665. Residues Glu-707 to Arg-729 are compositionally biased toward basic and acidic residues. The segment at Glu-707 to Ser-765 is disordered. Residues His-739–Val-748 show a composition bias toward polar residues.

It carries out the reaction S-ubiquitinyl-[E2 ubiquitin-conjugating enzyme]-L-cysteine + [acceptor protein]-L-lysine = [E2 ubiquitin-conjugating enzyme]-L-cysteine + N(6)-ubiquitinyl-[acceptor protein]-L-lysine.. It participates in protein modification; protein ubiquitination. In terms of biological role, functions as an E3 ubiquitin ligase. The polypeptide is U-box domain-containing protein 7 (PUB7) (Arabidopsis thaliana (Mouse-ear cress)).